The chain runs to 184 residues: C-phycoerythrin class 1 subunit beta (184 aa).

(2R,3E)-phycoerythrobilin is bound by residues Cys50 and Cys61. N4-methylasparagine is present on Asn72. 2 residues coordinate (2R,3E)-phycoerythrobilin: Cys82 and Cys165.

Belongs to the phycobiliprotein family. As to quaternary structure, heterodimer of an alpha and a beta chain. Post-translationally, contains three covalently linked phycoerythrobilin chromophores.

The protein localises to the cellular thylakoid membrane. Light-harvesting photosynthetic bile pigment-protein from the phycobiliprotein complex. The protein is C-phycoerythrin class 1 subunit beta (cpeB) of Synechococcus sp. (strain WH8020).